Reading from the N-terminus, the 301-residue chain is Protoheme IX farnesyltransferase (301 aa).

Transmembrane regions (helical) follow at residues 16 to 36 (VVALIVFTALVGMFLAIPGIP), 41 to 61 (IQSGALGFLGIWLAAAAAAAI), 93 to 113 (VFAGVLITLSMTILTLGVNLI), 114 to 134 (TAVLTFTSLIGYAVIYTVYLK), 141 to 161 (IVIGGLAGAMPPMLGWAAVTG), 172 to 192 (SLLVAIIFVWTPPHFWALAIF), 217 to 237 (QILLYTVILSVVTLLPVATGM), 238 to 258 (SGVFYLGAALVLDAVFLWYAW), and 273 to 293 (FGYSIVYLMALFAFLMFDHWL).

It belongs to the UbiA prenyltransferase family. Protoheme IX farnesyltransferase subfamily.

It is found in the cell inner membrane. It catalyses the reaction heme b + (2E,6E)-farnesyl diphosphate + H2O = Fe(II)-heme o + diphosphate. Its pathway is porphyrin-containing compound metabolism; heme O biosynthesis; heme O from protoheme: step 1/1. Functionally, converts heme B (protoheme IX) to heme O by substitution of the vinyl group on carbon 2 of heme B porphyrin ring with a hydroxyethyl farnesyl side group. The protein is Protoheme IX farnesyltransferase of Xylella fastidiosa (strain 9a5c).